We begin with the raw amino-acid sequence, 52 residues long: Large ribosomal subunit protein bL32c (52 aa).

It belongs to the bacterial ribosomal protein bL32 family.

It localises to the plastid. The protein localises to the chloroplast. The polypeptide is Large ribosomal subunit protein bL32c (Citrus sinensis (Sweet orange)).